The chain runs to 194 residues: Cilia- and flagella-associated protein 107 (194 aa).

Mn stretches follow at residues 45–60 (TPQS…FPDH) and 95–107 (ISTY…RHGY).

Microtubule inner protein component of sperm flagellar doublet microtubules. Expressed in airway epithelial cells.

The protein localises to the cytoplasm. The protein resides in the cytoskeleton. It localises to the cilium axoneme. Its subcellular location is the flagellum axoneme. Functionally, microtubule inner protein (MIP) part of the dynein-decorated doublet microtubules (DMTs) in cilia axoneme, which is required for motile cilia beating. This is Cilia- and flagella-associated protein 107 from Homo sapiens (Human).